The primary structure comprises 287 residues: Formamidopyrimidine-DNA glycosylase (287 aa).

Pro2 functions as the Schiff-base intermediate with DNA in the catalytic mechanism. Glu3 serves as the catalytic Proton donor. Lys58 functions as the Proton donor; for beta-elimination activity in the catalytic mechanism. His104, Arg123, and Arg166 together coordinate DNA. Residues 251-287 form an FPG-type zinc finger; it reads RVYDREGEPCPTPACKGVIAREVQAGRSTFFCPVCQV. The active-site Proton donor; for delta-elimination activity is Arg277.

Belongs to the FPG family. Monomer. Zn(2+) is required as a cofactor.

The enzyme catalyses Hydrolysis of DNA containing ring-opened 7-methylguanine residues, releasing 2,6-diamino-4-hydroxy-5-(N-methyl)formamidopyrimidine.. It carries out the reaction 2'-deoxyribonucleotide-(2'-deoxyribose 5'-phosphate)-2'-deoxyribonucleotide-DNA = a 3'-end 2'-deoxyribonucleotide-(2,3-dehydro-2,3-deoxyribose 5'-phosphate)-DNA + a 5'-end 5'-phospho-2'-deoxyribonucleoside-DNA + H(+). Involved in base excision repair of DNA damaged by oxidation or by mutagenic agents. Acts as a DNA glycosylase that recognizes and removes damaged bases. Has a preference for oxidized purines, such as 7,8-dihydro-8-oxoguanine (8-oxoG). Has AP (apurinic/apyrimidinic) lyase activity and introduces nicks in the DNA strand. Cleaves the DNA backbone by beta-delta elimination to generate a single-strand break at the site of the removed base with both 3'- and 5'-phosphates. This chain is Formamidopyrimidine-DNA glycosylase, found in Caulobacter vibrioides (strain ATCC 19089 / CIP 103742 / CB 15) (Caulobacter crescentus).